Consider the following 255-residue polypeptide: uncharacterized protein (255 aa).

The signal sequence occupies residues 1-23 (MKRLNKLVLGIIFLFLVISITAG). Residue Cys-24 is the site of N-palmitoyl cysteine attachment. Cys-24 carries the S-diacylglycerol cysteine lipid modification.

It belongs to the staphylococcal tandem lipoprotein family.

It is found in the cell membrane. This is an uncharacterized protein from Staphylococcus aureus (strain Mu50 / ATCC 700699).